Here is a 505-residue protein sequence, read N- to C-terminus: AMP phosphorylase (505 aa).

Residues Gly170, 196-201, and Thr205 each bind AMP; that span reads SRAITS. Asp258 serves as the catalytic Proton donor. Residues Ser266 and Lys290 each coordinate AMP.

It belongs to the thymidine/pyrimidine-nucleoside phosphorylase family. Type 2 subfamily.

The enzyme catalyses AMP + phosphate = alpha-D-ribose 1,5-bisphosphate + adenine. It catalyses the reaction CMP + phosphate = cytosine + alpha-D-ribose 1,5-bisphosphate. The catalysed reaction is UMP + phosphate = alpha-D-ribose 1,5-bisphosphate + uracil. Functionally, catalyzes the conversion of AMP and phosphate to adenine and ribose 1,5-bisphosphate (R15P). Exhibits phosphorylase activity toward CMP and UMP in addition to AMP. Functions in an archaeal AMP degradation pathway, together with R15P isomerase and RubisCO. In Methanococcus maripaludis (strain DSM 14266 / JCM 13030 / NBRC 101832 / S2 / LL), this protein is AMP phosphorylase.